Reading from the N-terminus, the 645-residue chain is UPF0313 protein CLM_0251 (645 aa).

Residues 295 to 566 enclose the Radical SAM core domain; that stretch reads AIKEVKFSIT…RMQRALLQFS (272 aa). Cysteine 309, cysteine 313, and cysteine 316 together coordinate [4Fe-4S] cluster. The interval 598–645 is disordered; it reads NKPYKKSHKKNNAKNNNNHYNKNNNYNKNKDISKKNKKNSLSKHKKRK. Residues 600–609 show a composition bias toward basic residues; the sequence is PYKKSHKKNN. The span at 610-624 shows a compositional bias: low complexity; it reads AKNNNNHYNKNNNYN. Over residues 632–645 the composition is skewed to basic residues; that stretch reads KNKKNSLSKHKKRK.

This sequence belongs to the UPF0313 family. The cofactor is [4Fe-4S] cluster.

The sequence is that of UPF0313 protein CLM_0251 from Clostridium botulinum (strain Kyoto / Type A2).